We begin with the raw amino-acid sequence, 209 residues long: Uracil phosphoribosyltransferase (209 aa).

5-phospho-alpha-D-ribose 1-diphosphate is bound by residues Arg-79, Arg-104, and 131–139 (DPMLATGGS). Uracil is bound by residues Ile-194 and 199–201 (GDA). Asp-200 lines the 5-phospho-alpha-D-ribose 1-diphosphate pocket.

The protein belongs to the UPRTase family. Mg(2+) serves as cofactor.

The enzyme catalyses UMP + diphosphate = 5-phospho-alpha-D-ribose 1-diphosphate + uracil. Its pathway is pyrimidine metabolism; UMP biosynthesis via salvage pathway; UMP from uracil: step 1/1. Its activity is regulated as follows. Allosterically activated by GTP. In terms of biological role, catalyzes the conversion of uracil and 5-phospho-alpha-D-ribose 1-diphosphate (PRPP) to UMP and diphosphate. The chain is Uracil phosphoribosyltransferase from Desulfitobacterium hafniense (strain DSM 10664 / DCB-2).